Here is a 203-residue protein sequence, read N- to C-terminus: Putative archaetidylserine decarboxylase proenzyme (203 aa).

Catalysis depends on Ser171, which acts as the Schiff-base intermediate with substrate; via pyruvic acid. Ser171 bears the Pyruvic acid (Ser); by autocatalysis mark.

This sequence belongs to the phosphatidylserine decarboxylase family. PSD-A subfamily. Heterodimer of a large membrane-associated beta subunit and a small pyruvoyl-containing alpha subunit. It depends on pyruvate as a cofactor. Post-translationally, is synthesized initially as an inactive proenzyme. Formation of the active enzyme involves a self-maturation process in which the active site pyruvoyl group is generated from an internal serine residue via an autocatalytic post-translational modification. Two non-identical subunits are generated from the proenzyme in this reaction, and the pyruvate is formed at the N-terminus of the alpha chain, which is derived from the carboxyl end of the proenzyme. The post-translation cleavage follows an unusual pathway, termed non-hydrolytic serinolysis, in which the side chain hydroxyl group of the serine supplies its oxygen atom to form the C-terminus of the beta chain, while the remainder of the serine residue undergoes an oxidative deamination to produce ammonia and the pyruvoyl prosthetic group on the alpha chain.

It is found in the cell membrane. It catalyses the reaction archaetidylserine + H(+) = archaetidylethanolamine + CO2. Its function is as follows. Catalyzes the formation of archaetidylethanolamine (PtdEtn) from archaetidylserine (PtdSer). The chain is Putative archaetidylserine decarboxylase proenzyme from Methanosarcina barkeri (strain Fusaro / DSM 804).